The chain runs to 248 residues: DNA repair protein RecO (248 aa).

Belongs to the RecO family.

In terms of biological role, involved in DNA repair and RecF pathway recombination. This is DNA repair protein RecO from Thermoanaerobacter sp. (strain X514).